Here is a 433-residue protein sequence, read N- to C-terminus: Probable beta-1,3-galactosyl-O-glycosyl-glycoprotein beta-1,6-N-acetylglucosaminyltransferase 7 (433 aa).

The Cytoplasmic segment spans residues 1–8 (MSQLRTTK). A helical; Signal-anchor for type II membrane protein membrane pass occupies residues 9-25 (AGLVACGMICAFIFLYL). Topologically, residues 26 to 433 (RNPGPEEAEA…QSHFNSQPHH (408 aa)) are extracellular. Disulfide bonds link cysteine 57–cysteine 209, cysteine 143–cysteine 358, cysteine 164–cysteine 191, and cysteine 367–cysteine 398. An N-linked (GlcNAc...) asparagine glycan is attached at asparagine 112. The disordered stretch occupies residues 233–275 (NITPGVTPPANSKPKTGQGPPKPSPDENSYTAPNTIFKQSPPH). Over residues 258–275 (DENSYTAPNTIFKQSPPH) the composition is skewed to polar residues. A disordered region spans residues 413–433 (VPPEPHWQFPQQSHFNSQPHH). The span at 421-433 (FPQQSHFNSQPHH) shows a compositional bias: polar residues.

It belongs to the glycosyltransferase 14 family.

It localises to the golgi apparatus membrane. It functions in the pathway protein modification; protein glycosylation. In terms of biological role, probable glycosyltransferase. In Mus musculus (Mouse), this protein is Probable beta-1,3-galactosyl-O-glycosyl-glycoprotein beta-1,6-N-acetylglucosaminyltransferase 7.